A 76-amino-acid polypeptide reads, in one-letter code: Alpha-amylase inhibitor Z-2685 (76 aa).

Cystine bridges form between Cys-9-Cys-25 and Cys-43-Cys-70.

Inhibits mammalian alpha-amylases specifically but has no action on plant and microbial alpha-amylases. The sequence is that of Alpha-amylase inhibitor Z-2685 from Streptomyces rochei (Streptomyces parvullus).